The sequence spans 269 residues: Probable cytochrome c oxidase subunit 2 (269 aa).

Transmembrane regions (helical) follow at residues 8 to 28 (ITLIGLVLFSSFCFASEPLPW), 50 to 70 (LLYISTAIVLFVAGLLVFVCI), and 87 to 107 (ILIEIIWTVIPIIILVIIAVP). Cu cation contacts are provided by histidine 189, cysteine 224, cysteine 228, and histidine 232.

This sequence belongs to the cytochrome c oxidase subunit 2 family. The cofactor is Cu cation. Requires heme as cofactor.

Its subcellular location is the cell membrane. The catalysed reaction is 4 Fe(II)-[cytochrome c] + O2 + 8 H(+)(in) = 4 Fe(III)-[cytochrome c] + 2 H2O + 4 H(+)(out). Functionally, subunits I and II form the functional core of the enzyme complex. Electrons originating in cytochrome c are transferred via heme a and Cu(A) to the binuclear center formed by heme a3 and Cu(B). The sequence is that of Probable cytochrome c oxidase subunit 2 (ctaC) from Rickettsia bellii (strain RML369-C).